Reading from the N-terminus, the 517-residue chain is Xaa-Pro dipeptidase (517 aa).

Asp244, Asp255, His336, Glu381, and Glu420 together coordinate Mn(2+).

The protein belongs to the peptidase M24B family. Bacterial-type prolidase subfamily. In terms of assembly, monomer. Mn(2+) serves as cofactor.

The catalysed reaction is Xaa-L-Pro dipeptide + H2O = an L-alpha-amino acid + L-proline. It catalyses the reaction diisopropyl fluorophosphate + H2O = diisopropyl phosphate + fluoride + 2 H(+). It carries out the reaction An aryl dialkyl phosphate + H2O = dialkyl phosphate + an aryl alcohol.. In terms of biological role, splits dipeptides with a prolyl or hydroxyprolyl residue in the C-terminal position and a nonpolar amino acid at the N-terminal position. Also catalyzes the hydrolysis of toxic organophosphorus cholinesterase-inhibiting compounds including insecticide paraoxon and nerve gases such as diisopropylfluorophosphate (DFP), O-isopropyl methylphosphonofluoridate (sarin), O-pinacolyl methylphosphonofluoridate (soman), and O-cyclohexyl methylphosphonofluoridate. In Alteromonas sp, this protein is Xaa-Pro dipeptidase (pepQ).